Here is a 624-residue protein sequence, read N- to C-terminus: Kelch-like ECH-associated protein 1 (624 aa).

C38 is subject to S-(2-succinyl)cysteine. One can recognise a BTB domain in the interval 77–149; the sequence is CDVTLQVKYE…AYTASISVGE (73 aa). R135 is covalently cross-linked (N5-[4-(S-L-cysteinyl)-5-methyl-1H-imidazol-2-yl]-L-ornithine (Arg-Cys) (interchain with C-151 in KEAP1)). S-(2,3-dicarboxypropyl)cysteine; alternate is present on C151. At C151 the chain carries S-(2-succinyl)cysteine; alternate. The residue at position 151 (C151) is an S-nitrosocysteine; alternate. An N5-[4-(S-L-cysteinyl)-5-methyl-1H-imidazol-2-yl]-L-ornithine (Cys-Arg) (interchain with R-135 in KEAP1) cross-link involves residue C151. Residues 184–286 enclose the BACK domain; sequence AIGIANFAEQ…TPRFLQTQLQ (103 aa). The residue at position 241 (C241) is an S-(2-succinyl)cysteine. 2 positions are modified to S-(2,3-dicarboxypropyl)cysteine: C257 and C273. C288 carries the S-(2,3-dicarboxypropyl)cysteine; alternate modification. Residue C288 is modified to S-(2-succinyl)cysteine; alternate. C319 is modified (S-(2-succinyl)cysteine). Kelch repeat units lie at residues 327-372, 373-423, 424-470, 471-517, 519-564, and 565-611; these read LIYT…VVGG, LLYA…VIDG, HIYA…VLNR, LLYA…VLHN, IYAA…VHQG, and KIYV…VTME. Residue C434 is modified to S-cGMP-cysteine. S-(2-succinyl)cysteine is present on C613.

The protein belongs to the KEAP1 family. In terms of assembly, component of the BCR(KEAP1) E3 ubiquitin ligase complex, at least composed of 2 molecules of CUL3, 2 molecules of KEAP1, and RBX1. Interacts with NFE2L2/NRF2; the interaction is direct. Forms a ternary complex with NFE2L2/NRF2 and PGAM5. Interacts with (phosphorylated) SQSTM1/p62; the interaction is direct and inactivates the BCR(KEAP1) complex by sequestering it in inclusion bodies, promoting its degradation. Interacts with NFE2L1. Interacts with BPTF and PTMA. Interacts with MAP1LC3B. Interacts indirectly with ENC1. Interacts with SESN1 and SESN2. Interacts with HSP90AA1 and HSP90AB1. Interacts with PGCKA1; this interaction prevents the ubiquitination of KEAP1 by TRIM25, thus protecting KEAP1 from degradation. Post-translationally, non-enzymatic covalent modifications of reactive cysteines by electrophile metabolites inactivate the BCR(KEAP1) complex. Accumulation of fumarate promotes the formation of cysteine S-succination (S-(2-succinyl)cysteine), leading to inactivate the BCR(KEAP1) complex and promote NFE2L2/NRF2 nuclear accumulation and activation. Nitric oxide-dependent 8-Nitro-cGMP formation promotes cysteine guanylation (S-cGMP-cysteine), leading to NFE2L2/NRF2 nuclear accumulation and activation. Itaconate, an anti-inflammatory metabolite generated in response to lipopolysaccharide, alkylates cysteines, activating NFE2L2/NRF2. Methylglyoxal, a reactive metabolite that accumulates when the glycolytic enzyme PGK1 is inhibited, promotes formation of a methylimidazole cross-link between proximal Cys-151 and Arg-135 on another KEAP1 molecule, resulting in an inactive dimer that inactivates the BCR(KEAP1) complex. Degraded via a proteasomal-independent process during selective autophagy: interaction with phosphorylated SQSTM1/p62 sequesters KEAP1 in inclusion bodies, leading to its degradation. In terms of processing, auto-ubiquitinated by the BCR(KEAP1) complex. Quinone-induced oxidative stress, but not sulforaphane, increases its ubiquitination. Ubiquitination and subsequent degradation is most pronounced following prolonged exposure of cells to oxidative stress, particularly in glutathione-deficient cells that are highly susceptible to oxidative stress. Deubiquitinated by USP25; leading to stabilization. Ubiquitinated by TRIM25; leading to degradation upon ER stress.

The protein resides in the cytoplasm. The protein localises to the nucleus. It functions in the pathway protein modification; protein ubiquitination. With respect to regulation, ubiquitin ligase activity of the BCR(KEAP1) complex is inhibited by oxidative stress and electrophile metabolites such as sulforaphane. Electrophile metabolites react with reactive cysteine residues in KEAP1 and trigger non-enzymatic covalent modifications of these cysteine residues, leading to inactivate the ubiquitin ligase activity of the BCR(KEAP1) complex. Selective autophagy also inactivates the BCR(KEAP1) complex via interaction between KEAP1 and SQSTM1/p62, which sequesters the complex in inclusion bodies and promotes its degradation. Substrate-specific adapter of a BCR (BTB-CUL3-RBX1) E3 ubiquitin ligase complex that regulates the response to oxidative stress by targeting NFE2L2/NRF2 for ubiquitination. KEAP1 acts as a key sensor of oxidative and electrophilic stress: in normal conditions, the BCR(KEAP1) complex mediates ubiquitination and degradation of NFE2L2/NRF2, a transcription factor regulating expression of many cytoprotective genes. In response to oxidative stress, different electrophile metabolites trigger non-enzymatic covalent modifications of highly reactive cysteine residues in KEAP1, leading to inactivate the ubiquitin ligase activity of the BCR(KEAP1) complex, promoting NFE2L2/NRF2 nuclear accumulation and expression of phase II detoxifying enzymes. In response to selective autophagy, KEAP1 is sequestered in inclusion bodies following its interaction with SQSTM1/p62, leading to inactivation of the BCR(KEAP1) complex and activation of NFE2L2/NRF2. The BCR(KEAP1) complex also mediates ubiquitination of SQSTM1/p62, increasing SQSTM1/p62 sequestering activity and degradation. The BCR(KEAP1) complex also targets BPTF and PGAM5 for ubiquitination and degradation by the proteasome. The chain is Kelch-like ECH-associated protein 1 from Mus musculus (Mouse).